Reading from the N-terminus, the 352-residue chain is tRNA N6-adenosine threonylcarbamoyltransferase (352 aa).

2 residues coordinate Fe cation: H115 and H119. Substrate-binding positions include 138–142 (LVSGG), D171, G184, and N277. Residue D305 participates in Fe cation binding.

It belongs to the KAE1 / TsaD family. Fe(2+) is required as a cofactor.

Its subcellular location is the cytoplasm. It carries out the reaction L-threonylcarbamoyladenylate + adenosine(37) in tRNA = N(6)-L-threonylcarbamoyladenosine(37) in tRNA + AMP + H(+). Its function is as follows. Required for the formation of a threonylcarbamoyl group on adenosine at position 37 (t(6)A37) in tRNAs that read codons beginning with adenine. Is involved in the transfer of the threonylcarbamoyl moiety of threonylcarbamoyl-AMP (TC-AMP) to the N6 group of A37, together with TsaE and TsaB. TsaD likely plays a direct catalytic role in this reaction. The protein is tRNA N6-adenosine threonylcarbamoyltransferase of Variovorax paradoxus (strain S110).